A 349-amino-acid chain; its full sequence is Biotin synthase (349 aa).

The Radical SAM core domain occupies 60–287 (GDVELATLLS…KARVRLSAGR (228 aa)). [4Fe-4S] cluster-binding residues include Cys75, Cys79, and Cys82. Residues Cys119, Cys150, Cys210, and Arg282 each contribute to the [2Fe-2S] cluster site.

The protein belongs to the radical SAM superfamily. Biotin synthase family. In terms of assembly, homodimer. It depends on [4Fe-4S] cluster as a cofactor. The cofactor is [2Fe-2S] cluster.

It catalyses the reaction (4R,5S)-dethiobiotin + (sulfur carrier)-SH + 2 reduced [2Fe-2S]-[ferredoxin] + 2 S-adenosyl-L-methionine = (sulfur carrier)-H + biotin + 2 5'-deoxyadenosine + 2 L-methionine + 2 oxidized [2Fe-2S]-[ferredoxin]. It participates in cofactor biosynthesis; biotin biosynthesis; biotin from 7,8-diaminononanoate: step 2/2. Functionally, catalyzes the conversion of dethiobiotin (DTB) to biotin by the insertion of a sulfur atom into dethiobiotin via a radical-based mechanism. In Albidiferax ferrireducens (strain ATCC BAA-621 / DSM 15236 / T118) (Rhodoferax ferrireducens), this protein is Biotin synthase.